The sequence spans 517 residues: GMP synthase [glutamine-hydrolyzing] (517 aa).

The Glutamine amidotransferase type-1 domain occupies 9 to 199 (RILILDFGSQ…VLGVCGCERL (191 aa)). The active-site Nucleophile is the Cys86. Catalysis depends on residues His173 and Glu175. The GMPS ATP-PPase domain maps to 200–392 (WTSESIIEDA…LGLPYEMLYR (193 aa)). 227–233 (SGGVDSS) contacts ATP.

In terms of assembly, homodimer.

It catalyses the reaction XMP + L-glutamine + ATP + H2O = GMP + L-glutamate + AMP + diphosphate + 2 H(+). It participates in purine metabolism; GMP biosynthesis; GMP from XMP (L-Gln route): step 1/1. Its function is as follows. Catalyzes the synthesis of GMP from XMP. In Vibrio vulnificus (strain YJ016), this protein is GMP synthase [glutamine-hydrolyzing].